We begin with the raw amino-acid sequence, 588 residues long: Aspartate--tRNA ligase (588 aa).

Residue E174 participates in L-aspartate binding. The segment at 198 to 201 (QLFK) is aspartate. L-aspartate is bound at residue R220. ATP contacts are provided by residues 220-222 (RDE) and Q229. H448 provides a ligand contact to L-aspartate. E482 contributes to the ATP binding site. R489 serves as a coordination point for L-aspartate. 534–537 (GIDR) is an ATP binding site.

Belongs to the class-II aminoacyl-tRNA synthetase family. Type 1 subfamily. Homodimer.

The protein localises to the cytoplasm. It carries out the reaction tRNA(Asp) + L-aspartate + ATP = L-aspartyl-tRNA(Asp) + AMP + diphosphate. In terms of biological role, catalyzes the attachment of L-aspartate to tRNA(Asp) in a two-step reaction: L-aspartate is first activated by ATP to form Asp-AMP and then transferred to the acceptor end of tRNA(Asp). This chain is Aspartate--tRNA ligase, found in Xanthomonas campestris pv. campestris (strain 8004).